Here is a 274-residue protein sequence, read N- to C-terminus: Cytochrome b-c1 complex subunit Rieske, mitochondrial (274 aa).

Residues 79–103 (SHTDVKVPDFCDYRRPEVLDSTKSS) are Mitochondrial matrix-facing. Residues 104-140 (RESSEARKSFSYMVTAVTTVGVAYAAKNAVTQFVSSM) form a helical membrane-spanning segment. Residues 141–274 (SASADVLAMA…FTSDDMVVVG (134 aa)) lie on the Mitochondrial intermembrane side of the membrane. One can recognise a Rieske domain in the interval 187–272 (EAAVELSQLR…YEFTSDDMVV (86 aa)). Cys-217, His-219, Cys-236, His-239, and Ser-241 together coordinate [2Fe-2S] cluster. Cys-222 and Cys-238 form a disulfide bridge.

This sequence belongs to the Rieske iron-sulfur protein family. In terms of assembly, component of the ubiquinol-cytochrome c oxidoreductase (cytochrome b-c1 complex, complex III, CIII), a multisubunit enzyme composed of 11 subunits. The complex is composed of 3 respiratory subunits cytochrome b, cytochrome c1 and Rieske protein UQCRFS1, 2 core protein subunits UQCRC1/QCR1 and UQCRC2/QCR2, and 6 low-molecular weight protein subunits UQCRH/QCR6, UQCRB/QCR7, UQCRQ/QCR8, UQCR10/QCR9, UQCR11/QCR10 and subunit 9, the cleavage product of Rieske protein UQCRFS1. The complex exists as an obligatory dimer and forms supercomplexes (SCs) in the inner mitochondrial membrane with NADH-ubiquinone oxidoreductase (complex I, CI) and cytochrome c oxidase (complex IV, CIV), resulting in different assemblies (supercomplex SCI(1)III(2)IV(1) and megacomplex MCI(2)III(2)IV(2)). Incorporation of the Rieske protein UQCRFS1 is the penultimate step in complex III assembly. Interacts with TTC19, which is involved in the clearance of UQCRFS1 fragments. Component of the ubiquinol-cytochrome c oxidoreductase (cytochrome b-c1 complex, complex III, CIII). Subunit 9 corresponds to the mitochondrial targeting sequence (MTS) of Rieske protein UQCRFS1. It is retained after processing and incorporated inside complex III, where it remains bound to the complex and localizes between the 2 core subunits UQCRC1/QCR1 and UQCRC2/QCR2. It depends on [2Fe-2S] cluster as a cofactor. Post-translationally, proteolytic processing is necessary for the correct insertion of UQCRFS1 in the complex III dimer. Several fragments are generated during UQCRFS1 insertion, most probably due to the endogenous matrix-processing peptidase (MPP) activity of the 2 core protein subunits UQCRC1/QCR1 and UQCRC2/QCR2, which are homologous to the 2 mitochondrial-processing peptidase (MPP) subunits beta-MPP and alpha-MPP respectively. The action of the protease is also necessary for the clearance of the UQCRFS1 fragments.

Its subcellular location is the mitochondrion inner membrane. It carries out the reaction a quinol + 2 Fe(III)-[cytochrome c](out) = a quinone + 2 Fe(II)-[cytochrome c](out) + 2 H(+)(out). Component of the ubiquinol-cytochrome c oxidoreductase, a multisubunit transmembrane complex that is part of the mitochondrial electron transport chain which drives oxidative phosphorylation. The respiratory chain contains 3 multisubunit complexes succinate dehydrogenase (complex II, CII), ubiquinol-cytochrome c oxidoreductase (cytochrome b-c1 complex, complex III, CIII) and cytochrome c oxidase (complex IV, CIV), that cooperate to transfer electrons derived from NADH and succinate to molecular oxygen, creating an electrochemical gradient over the inner membrane that drives transmembrane transport and the ATP synthase. The cytochrome b-c1 complex catalyzes electron transfer from ubiquinol to cytochrome c, linking this redox reaction to translocation of protons across the mitochondrial inner membrane, with protons being carried across the membrane as hydrogens on the quinol. In the process called Q cycle, 2 protons are consumed from the matrix, 4 protons are released into the intermembrane space and 2 electrons are passed to cytochrome c. The Rieske protein is a catalytic core subunit containing a [2Fe-2S] iron-sulfur cluster. It cycles between 2 conformational states during catalysis to transfer electrons from the quinol bound in the Q(0) site in cytochrome b to cytochrome c1. Incorporation of UQCRFS1 is the penultimate step in complex III assembly. In terms of biological role, component of the ubiquinol-cytochrome c oxidoreductase (cytochrome b-c1 complex, complex III, CIII). UQCRFS1 undergoes proteolytic processing once it is incorporated in the complex III dimer. One of the fragments, called subunit 9, corresponds to its mitochondrial targeting sequence (MTS). The proteolytic processing is necessary for the correct insertion of UQCRFS1 in the complex III dimer, but the persistence of UQCRFS1-derived fragments may prevent newly imported UQCRFS1 to be processed and assembled into complex III and is detrimental for the complex III structure and function. This chain is Cytochrome b-c1 complex subunit Rieske, mitochondrial (UQCRFS1), found in Colobus polykomos (Western black-and-white colobus monkey).